Consider the following 65-residue polypeptide: Large ribosomal subunit protein uL29 (65 aa).

The protein belongs to the universal ribosomal protein uL29 family.

The chain is Large ribosomal subunit protein uL29 from Paracidovorax citrulli (strain AAC00-1) (Acidovorax citrulli).